We begin with the raw amino-acid sequence, 99 residues long: UPF0213 protein spr1390 (99 aa).

One can recognise a GIY-YIG domain in the interval 3-78; it reads HKAYMYVLEC…KRKKRPQKEE (76 aa).

This sequence belongs to the UPF0213 family.

This is UPF0213 protein spr1390 from Streptococcus pneumoniae (strain ATCC BAA-255 / R6).